Here is a 147-residue protein sequence, read N- to C-terminus: D-aminoacyl-tRNA deacylase (147 aa).

A Gly-cisPro motif, important for rejection of L-amino acids motif is present at residues 136–137; the sequence is GP.

The protein belongs to the DTD family. Homodimer.

The protein resides in the cytoplasm. It carries out the reaction glycyl-tRNA(Ala) + H2O = tRNA(Ala) + glycine + H(+). The catalysed reaction is a D-aminoacyl-tRNA + H2O = a tRNA + a D-alpha-amino acid + H(+). In terms of biological role, an aminoacyl-tRNA editing enzyme that deacylates mischarged D-aminoacyl-tRNAs. Also deacylates mischarged glycyl-tRNA(Ala), protecting cells against glycine mischarging by AlaRS. Acts via tRNA-based rather than protein-based catalysis; rejects L-amino acids rather than detecting D-amino acids in the active site. By recycling D-aminoacyl-tRNA to D-amino acids and free tRNA molecules, this enzyme counteracts the toxicity associated with the formation of D-aminoacyl-tRNA entities in vivo and helps enforce protein L-homochirality. The protein is D-aminoacyl-tRNA deacylase of Streptococcus sanguinis (strain SK36).